The primary structure comprises 144 residues: 3-dehydroquinate dehydratase (144 aa).

The Proton acceptor role is filled by Tyr22. 3 residues coordinate substrate: Asn71, His77, and Asp84. The active-site Proton donor is His97. Substrate contacts are provided by residues 98 to 99 (IS) and Arg108.

Belongs to the type-II 3-dehydroquinase family. As to quaternary structure, homododecamer.

It catalyses the reaction 3-dehydroquinate = 3-dehydroshikimate + H2O. It participates in metabolic intermediate biosynthesis; chorismate biosynthesis; chorismate from D-erythrose 4-phosphate and phosphoenolpyruvate: step 3/7. Its function is as follows. Catalyzes a trans-dehydration via an enolate intermediate. The protein is 3-dehydroquinate dehydratase (aroQ) of Thermotoga maritima (strain ATCC 43589 / DSM 3109 / JCM 10099 / NBRC 100826 / MSB8).